Here is a 184-residue protein sequence, read N- to C-terminus: Fruit protein pKIWI501 (184 aa).

The disordered stretch occupies residues 1–184 (MATVEVTPAV…TEVPVDKTEE (184 aa)). 2 stretches are compositionally biased toward low complexity: residues 25–36 (PQEPQPEAAVAA) and 53–65 (PEAV…PAAT). The span at 72–92 (EVAEAEEEVVEEPQEVPEEPV) shows a compositional bias: acidic residues. A compositionally biased stretch (basic and acidic residues) spans 96–119 (AAKEVEATEGKAEPTGEMKDKTPE). Residues 120-156 (ATDAPEAPAAAEEPTDAPEAPAVAEEPTNAPEAPAVG) are compositionally biased toward low complexity. Positions 159–168 (PEAKEGKPDE) are enriched in basic and acidic residues.

This sequence to H.brasiliensis latex allergen Hev b 5.

The chain is Fruit protein pKIWI501 from Actinidia deliciosa (Kiwi).